The sequence spans 399 residues: Acetate kinase (399 aa).

N8 lines the Mg(2+) pocket. Residue K15 participates in ATP binding. R89 contacts substrate. Residue D147 is the Proton donor/acceptor of the active site. Residues 207–211 (HMGNG), 284–286 (DMR), and 332–336 (GIGEN) contribute to the ATP site. A Mg(2+)-binding site is contributed by E385.

The protein belongs to the acetokinase family. Homodimer. Mg(2+) serves as cofactor. Mn(2+) is required as a cofactor.

The protein localises to the cytoplasm. The enzyme catalyses acetate + ATP = acetyl phosphate + ADP. It functions in the pathway metabolic intermediate biosynthesis; acetyl-CoA biosynthesis; acetyl-CoA from acetate: step 1/2. Catalyzes the formation of acetyl phosphate from acetate and ATP. Can also catalyze the reverse reaction. The chain is Acetate kinase from Streptococcus mutans serotype c (strain ATCC 700610 / UA159).